Here is a 113-residue protein sequence, read N- to C-terminus: ATP-dependent Clp protease adapter protein ClpS (113 aa).

The protein belongs to the ClpS family. As to quaternary structure, binds to the N-terminal domain of the chaperone ClpA.

Its function is as follows. Involved in the modulation of the specificity of the ClpAP-mediated ATP-dependent protein degradation. This Leptospira biflexa serovar Patoc (strain Patoc 1 / Ames) protein is ATP-dependent Clp protease adapter protein ClpS.